The following is a 218-amino-acid chain: Probable GTP-binding protein EngB (218 aa).

The 175-residue stretch at 31-205 (SGIEIAFAGR…EQKVTSWYAQ (175 aa)) folds into the EngB-type G domain. GTP is bound by residues 39–46 (GRSNAGKS), 66–70 (GRTQL), 84–87 (DLPG), 151–154 (TKAD), and 184–186 (FSS). Mg(2+) contacts are provided by Ser46 and Thr68.

It belongs to the TRAFAC class TrmE-Era-EngA-EngB-Septin-like GTPase superfamily. EngB GTPase family. The cofactor is Mg(2+).

In terms of biological role, necessary for normal cell division and for the maintenance of normal septation. The polypeptide is Probable GTP-binding protein EngB (Psychromonas ingrahamii (strain DSM 17664 / CCUG 51855 / 37)).